The sequence spans 361 residues: tRNA-specific 2-thiouridylase MnmA (361 aa).

Residues 6–13 (AMSGGVDS) and leucine 32 contribute to the ATP site. The active-site Nucleophile is the cysteine 99. Cysteine 99 and cysteine 196 form a disulfide bridge. Glycine 123 contacts ATP. Residues 145-147 (RDQ) form an interaction with tRNA region. The active-site Cysteine persulfide intermediate is cysteine 196.

The protein belongs to the MnmA/TRMU family.

The protein localises to the cytoplasm. It carries out the reaction S-sulfanyl-L-cysteinyl-[protein] + uridine(34) in tRNA + AH2 + ATP = 2-thiouridine(34) in tRNA + L-cysteinyl-[protein] + A + AMP + diphosphate + H(+). In terms of biological role, catalyzes the 2-thiolation of uridine at the wobble position (U34) of tRNA, leading to the formation of s(2)U34. This chain is tRNA-specific 2-thiouridylase MnmA, found in Gluconobacter oxydans (strain 621H) (Gluconobacter suboxydans).